A 462-amino-acid chain; its full sequence is Toxin CfTX-2 (462 aa).

A signal peptide spans 1–17; it reads MILVSLLPLLFMTGIAS.

This sequence belongs to the jellyfish toxin family. Type I subfamily. In terms of assembly, oligomer. In terms of processing, contains disulfide bonds. As to expression, nematocytes.

The protein resides in the secreted. Its subcellular location is the nematocyst. It localises to the target cell membrane. Functionally, may cause profound effects on the cardiovascular system of anesthetized rats (at 25 ug/kg), since the fraction containing this toxin and CfTX-1 produces an initial increase in mean arterial pressure, followed by cardiovascular collapse in all animals within 1 minute of injection. To note, the same fraction does not induce significant change in heart rate. Has weak hemolytic activity. Is lethal to crayfish. Causes cutaneous inflammation in humans. May act as a pore-forming toxin, disrupting normal transmembrane ion concentration gradients in susceptible cells. This chain is Toxin CfTX-2, found in Chironex fleckeri (Australian box jellyfish).